Reading from the N-terminus, the 563-residue chain is Arginine--tRNA ligase (563 aa).

The 'HIGH' region signature appears at 121–131 (PNIAKPFSIGH).

The protein belongs to the class-I aminoacyl-tRNA synthetase family. In terms of assembly, monomer.

The protein resides in the cytoplasm. The catalysed reaction is tRNA(Arg) + L-arginine + ATP = L-arginyl-tRNA(Arg) + AMP + diphosphate. The protein is Arginine--tRNA ligase of Streptococcus pyogenes serotype M3 (strain ATCC BAA-595 / MGAS315).